A 246-amino-acid polypeptide reads, in one-letter code: MADS-box transcription factor 14 (246 aa).

Positions 1-61 (MGRGKVQLKR…GKLYKYATDS (61 aa)) constitute an MADS-box domain. The region spanning 88-178 (QGNWCHEYRK…QKELVEKQKV (91 aa)) is the K-box domain. The disordered stretch occupies residues 180 to 199 (KQQVQWDQTQPQTSSSSSSF).

In terms of tissue distribution, highly expressed in sterile lemmas, at intermediate levels in stamens, and weakly in lemmas, paleas and carpels.

It localises to the nucleus. Its function is as follows. Probable transcription factor. This Oryza sativa subsp. indica (Rice) protein is MADS-box transcription factor 14 (MADS14).